We begin with the raw amino-acid sequence, 125 residues long: Nuclear envelope phosphatase-regulatory subunit 1 (125 aa).

M1 is modified (N-acetylmethionine). The next 2 membrane-spanning stretches (helical) occupy residues 33 to 53 and 65 to 85; these read MLLIVVSVCTATGAWNWLIDP and WNHPFFTISCITLIGLFFAGI.

It belongs to the CNEP1R1 family. As to quaternary structure, interacts with CTDNEP1; the complex dephosphorylates LPIN1 and LPIN2.

It is found in the nucleus membrane. Its subcellular location is the cytoplasm. Its function is as follows. Forms with the serine/threonine protein phosphatase CTDNEP1 an active complex which dephosphorylates and may activate LPIN1 and LPIN2. LPIN1 and LPIN2 are phosphatidate phosphatases that catalyze the conversion of phosphatidic acid to diacylglycerol and control the metabolism of fatty acids at different levels. May indirectly modulate the lipid composition of nuclear and/or endoplasmic reticulum membranes and be required for proper nuclear membrane morphology and/or dynamics. May also indirectly regulate the production of lipid droplets and triacylglycerol. The protein is Nuclear envelope phosphatase-regulatory subunit 1 (CNEP1R1) of Bos taurus (Bovine).